A 710-amino-acid polypeptide reads, in one-letter code: PC3-like endoprotease variant B (710 aa).

A signal peptide spans 1–29 (MNYRGIYRRRYVFVLLLLVAVVNISYGWT). N-linked (GlcNAc...) asparagine glycans are attached at residues asparagine 23, asparagine 62, and asparagine 190. Positions 30-152 (VLKNKDYKRR…QQKILERVKR (123 aa)) are excised as a propeptide. The Peptidase S8 domain occupies 164-486 (MWYLLNTGQA…FGRLDANAMV (323 aa)). Catalysis depends on charge relay system residues aspartate 202 and histidine 242. Intrachain disulfides connect cysteine 259–cysteine 411 and cysteine 351–cysteine 381. Serine 419 acts as the Charge relay system in catalysis. Positions 495 to 638 (LPAQRKCTAA…EERVIDTQTK (144 aa)) constitute a P/Homo B domain. Cysteine 501 and cysteine 527 are joined by a disulfide. Residues 668–710 (TIEGSTQDHVKPKEGAKEPWGNYRNTNNINNNSSTAFKRKKKQ) form a disordered region. Over residues 673–684 (TQDHVKPKEGAK) the composition is skewed to basic and acidic residues. Positions 689–699 (NYRNTNNINNN) are enriched in low complexity. Asparagine 698 and asparagine 699 each carry an N-linked (GlcNAc...) asparagine glycan.

Belongs to the peptidase S8 family. Furin subfamily. In terms of tissue distribution, predominantly in the body column.

Its function is as follows. Probably involved in the processing of hormone and other protein precursors at sites comprised of pairs of basic amino acid residues. This is PC3-like endoprotease variant B from Hydra vulgaris (Hydra).